A 76-amino-acid chain; its full sequence is Secreted RxLR effector protein 31 (76 aa).

The signal sequence occupies residues 1–24 (MRHCACLFHLFLIGFLCNVYFSAC). The short motif at 49-64 (RILRANDSEFLLTEER) is the RxLR-dEER element. N-linked (GlcNAc...) asparagine glycosylation occurs at Asn-54.

It belongs to the RxLR effector family.

It localises to the secreted. It is found in the host nucleus. Its subcellular location is the host cytoplasm. Functionally, secreted effector that dos not suppress the host cell death induced by cell death-inducing proteins. The sequence is that of Secreted RxLR effector protein 31 from Plasmopara viticola (Downy mildew of grapevine).